We begin with the raw amino-acid sequence, 448 residues long: Fibulin-5 (448 aa).

The first 23 residues, 1 to 23 (MPGFKRILTVTVLALCLPTPGNA), serve as a signal peptide directing secretion. The EGF-like 1; calcium-binding domain maps to 42–82 (DVDECRTIPEACRGDMMCVNQNGGYLCIPRTNPVYRGPYSN). 17 disulfides stabilise this stretch: cysteine 46-cysteine 59, cysteine 53-cysteine 68, cysteine 131-cysteine 144, cysteine 138-cysteine 153, cysteine 155-cysteine 166, cysteine 172-cysteine 181, cysteine 177-cysteine 190, cysteine 192-cysteine 205, cysteine 211-cysteine 221, cysteine 217-cysteine 230, cysteine 232-cysteine 245, cysteine 251-cysteine 262, cysteine 258-cysteine 271, cysteine 273-cysteine 286, cysteine 292-cysteine 305, cysteine 299-cysteine 314, and cysteine 320-cysteine 332. The Cell attachment site signature appears at 54–56 (RGD). Residues 127–167 (DVDECATDSHQCNPTQICINTEGGYTCSCTDGYWLLEGQCL) form the EGF-like 2; calcium-binding domain. In terms of domain architecture, EGF-like 3; calcium-binding spans 168–206 (DIDECRYGYCQQLCANVPGSYSCTCNPGFTLNEDGRSCQ). The EGF-like 4; calcium-binding domain occupies 207–246 (DVNECATENPCVQTCVNTYGSFICRCDPGYELEDDGVHCS). Residues 245 to 448 (CSDMDECSFS…LRIYVSQYPF (204 aa)) form an interaction with LOXL1 region. An EGF-like 5; calcium-binding domain is found at 247–287 (DMDECSFSEFLCQHECVNQPGTYFCSCPAGYILLDDNRSCQ). N-linked (GlcNAc...) asparagine glycosylation is found at asparagine 283 and asparagine 296. The EGF-like 6; calcium-binding domain occupies 288 to 333 (DINECEHRNHTCILQQTCYNLQGGFKCIDPIRCEEPYLRISDNRCM).

It belongs to the fibulin family. In terms of assembly, homodimer. Monomer, homodimerizes in presence of Ca(2+). Interacts with ELN. Interacts (via N-terminus) with the integrins ITGAV/ITGB3, ITGAV/ITGB5 and ITGA9/ITGB1. Interacts with FBN1 (via N-terminal domain). Forms a ternary complex with ELN and FBN1. Interacts with EFEMP2 with moderate affinity. Interacts with LOXL1. Post-translationally, N-glycosylated.

Its subcellular location is the secreted. The protein localises to the extracellular space. It is found in the extracellular matrix. In terms of biological role, essential for elastic fiber formation, is involved in the assembly of continuous elastin (ELN) polymer and promotes the interaction of microfibrils and ELN. Stabilizes and organizes elastic fibers in the skin, lung and vasculature. Promotes adhesion of endothelial cells through interaction of integrins and the RGD motif. Vascular ligand for integrin receptors which may play a role in vascular development and remodeling. May act as an adapter that mediates the interaction between FBN1 and ELN. The protein is Fibulin-5 (FBLN5) of Bos taurus (Bovine).